Consider the following 71-residue polypeptide: Large ribosomal subunit protein bL31 (71 aa).

The protein belongs to the bacterial ribosomal protein bL31 family. Type A subfamily. Part of the 50S ribosomal subunit.

Functionally, binds the 23S rRNA. This chain is Large ribosomal subunit protein bL31, found in Metamycoplasma arthritidis (strain 158L3-1) (Mycoplasma arthritidis).